Here is a 369-residue protein sequence, read N- to C-terminus: Cobalt-precorrin-5B C(1)-methyltransferase (369 aa).

It belongs to the CbiD family.

It catalyses the reaction Co-precorrin-5B + S-adenosyl-L-methionine = Co-precorrin-6A + S-adenosyl-L-homocysteine. Its pathway is cofactor biosynthesis; adenosylcobalamin biosynthesis; cob(II)yrinate a,c-diamide from sirohydrochlorin (anaerobic route): step 6/10. In terms of biological role, catalyzes the methylation of C-1 in cobalt-precorrin-5B to form cobalt-precorrin-6A. The sequence is that of Cobalt-precorrin-5B C(1)-methyltransferase from Methanococcus vannielii (strain ATCC 35089 / DSM 1224 / JCM 13029 / OCM 148 / SB).